The primary structure comprises 356 residues: MVSLLQEIDTEHEDMVHHAALDFYGLLLATCSSDGSVRIFHSRKNNKALAELKGHQGPVWQVAWAHPKFGNILASCSYDRKVIVWKSTTPRDWTKLYEYSNHDSSVNSVDFAPSEYGLVLACASSDGSVSVLTCNTEYGVWDAKKIPNAHTIGVNAISWCPAQAPDPAFDQRVTSRSAAVKRLVSGGCDNLVKIWREDNDRWVEEHRLEAHSDWVRDVAWAPSIGLPRSQIATASQDRHVIVWSSNADLSEWTSTVLHTFDDAVWSISWSTTGNILAVTGGDNNVTLWKENTEGQWIRINYESGTAIQSKQPSHLPHSHSQQQQALQQHQQQAPSHPGPSSDSEHSSNLSNSQLSN.

6 WD repeats span residues 11 to 50, 54 to 95, 101 to 142, 149 to 205, 210 to 253, and 259 to 298; these read EHED…KALA, GHQG…DWTK, NHDS…GVWD, AHTI…WVEE, AHSD…SEWT, and TFDD…QWIR. The segment at 307 to 356 is disordered; it reads IQSKQPSHLPHSHSQQQQALQQHQQQAPSHPGPSSDSEHSSNLSNSQLSN. A compositionally biased stretch (low complexity) spans 308–356; that stretch reads QSKQPSHLPHSHSQQQQALQQHQQQAPSHPGPSSDSEHSSNLSNSQLSN.

The protein belongs to the WD repeat SEC13 family. As to quaternary structure, probable component of the nuclear pore complex (NPC). Component of the GATOR complex consisting of mio, Nup44A/Seh1, Im11, Nplr3, Nplr2, Wdr24, Wdr59 and Sec13. Within the GATOR complex, probable component of the GATOR2 subcomplex which is likely composed of mio, Nup44A/Seh1, Wdr24, Wdr59 and Sec13. Interacts with msk. Interacts (preferentially when phosphorylated) with Mad. The GATOR2 complex associates with unmet in the absence of S-adenosyl-L-methionine; the mio-Wdr24-Nup44A subcomplex is essential and sufficient for this interaction while Wdr59 and Sec13 are dispensable. This association acts as a nutrient sensor to inhibit mTORC1 signaling in the absence of methionine. As to expression, salivary glands.

It is found in the nucleus envelope. It localises to the nucleus. Its subcellular location is the nucleoplasm. The protein localises to the cytoplasm. The protein resides in the cytoskeleton. It is found in the microtubule organizing center. It localises to the centrosome. Its subcellular location is the nuclear pore complex. The protein localises to the cytoplasmic vesicle. The protein resides in the COPII-coated vesicle membrane. It is found in the endoplasmic reticulum membrane. It localises to the lysosome membrane. In terms of biological role, functions as a component of the nuclear pore complex (NPC) and the COPII coat. At the endoplasmic reticulum, SEC13 is involved in the biogenesis of COPII-coated vesicles. Recruited to transcriptionally active chromatin at the time of transcription initiation by RNA polymerase II. Required for proper expression of ecdysone-responsive genes such as Eip74EF and Eip75B during larval development. Required for reactivation of transcription after heat shock. Required for nuclear import of phosphorylated Mad via importin msk. Has no role in classical nuclear localization signal (cNLS)-dependent nuclear import via importin-beta. Its function is as follows. A component of the GATOR subcomplex GATOR2 which functions as an activator of the amino acid-sensing branch of the mTORC1 signaling pathway. The two GATOR subcomplexes, GATOR1 and GATOR2, regulate the mTORC1 pathway in order to mediate metabolic homeostasis, female gametogenesis and the response to amino acid limitation and complete starvation. GATOR2 activates the mTORC1 signaling pathway through the inhibition of the GATOR1 subcomplex, controlling the switch to cell proliferation and growth under nutrient replete conditions and during female oocyte development. This chain is Protein SEC13 homolog, found in Drosophila melanogaster (Fruit fly).